Consider the following 114-residue polypeptide: Protein S40-2 (114 aa).

Residues 23-50 (RYTKLYNSRNDEKKGTRRHETAEKTSPV) form a disordered region. A compositionally biased stretch (basic and acidic residues) spans 31–45 (RNDEKKGTRRHETAE).

Belongs to the senescence regulator S40 family.

It is found in the cytoplasm. The protein is Protein S40-2 of Arabidopsis thaliana (Mouse-ear cress).